The following is a 173-amino-acid chain: T-cell surface glycoprotein CD3 gamma chain (173 aa).

The first 22 residues, 1–22 (MEQGKHLAGLILAVFLLQGTMA), serve as a signal peptide directing secretion. The Extracellular portion of the chain corresponds to 23–111 (HVKEVKVDDN…NCIELNPSTV (89 aa)). Residues 24 to 94 (VKEVKVDDNR…GSNNQSKSLQ (71 aa)) form the Ig-like domain. Cysteines 42 and 83 form a disulfide. 2 N-linked (GlcNAc...) asparagine glycosylation sites follow: Asn45 and Asn88. Residues 112 to 132 (AGFIFTEIVSIFLLAVGVYFI) traverse the membrane as a helical segment. Topologically, residues 133-173 (AGQEGVRQSRASDKQTLLNNDQLYQPLKEREDDQYSHLRKN) are cytoplasmic. At Ser141 the chain carries Phosphoserine. Phosphoserine; by PKC is present on Ser144. Residues 145-173 (DKQTLLNNDQLYQPLKEREDDQYSHLRKN) form the ITAM domain. The short motif at 149–150 (LL) is the Di-leucine motif element.

In terms of assembly, the TCR-CD3 complex is composed of a CD3D/CD3E and a CD3G/CD3E heterodimers that preferentially associate with TCRalpha and TCRbeta, respectively, to form TCRalpha/CD3E/CD3G and TCRbeta/CD3G/CD3E trimers. In turn, the hexamer interacts with CD3Z homodimer to form the TCR-CD3 complex. Alternatively, TCRalpha and TCRbeta can be replaced by TCRgamma and TCRdelta. Post-translationally, phosphorylated on Tyr residues after T-cell receptor triggering by LCK in association with CD4/CD8. Phosphorylated also by PKC; leading to the TCR complex down-regulation. In terms of processing, phosphorylated on Tyr residues after T-cell receptor triggering by LCK in association with CD4/CD8.

It localises to the cell membrane. Functionally, part of the TCR-CD3 complex present on T-lymphocyte cell surface that plays an essential role in adaptive immune response. When antigen presenting cells (APCs) activate T-cell receptor (TCR), TCR-mediated signals are transmitted across the cell membrane by the CD3 chains CD3D, CD3E, CD3G and CD3Z. All CD3 chains contain immunoreceptor tyrosine-based activation motifs (ITAMs) in their cytoplasmic domain. Upon TCR engagement, these motifs become phosphorylated by Src family protein tyrosine kinases LCK and FYN, resulting in the activation of downstream signaling pathways. In addition to this role of signal transduction in T-cell activation, CD3G plays an essential role in the dynamic regulation of TCR expression at the cell surface. Indeed, constitutive TCR cycling is dependent on the di-leucine-based (diL) receptor-sorting motif present in CD3G. This Bos taurus (Bovine) protein is T-cell surface glycoprotein CD3 gamma chain (CD3G).